The sequence spans 301 residues: GTPase Era (301 aa).

The 169-residue stretch at 7–175 folds into the Era-type G domain; it reads YCGFIAIVGR…AAIVRKHLPE (169 aa). Residues 15–22 form a G1 region; that stretch reads GRPNVGKS. A GTP-binding site is contributed by 15–22; sequence GRPNVGKS. The tract at residues 41-45 is G2; sequence QTTRH. The G3 stretch occupies residues 62-65; it reads DTPG. GTP-binding positions include 62-66 and 124-127; these read DTPGL and NKVD. The tract at residues 124 to 127 is G4; it reads NKVD. The segment at 154 to 156 is G5; the sequence is ISA. The 78-residue stretch at 206 to 283 folds into the KH type-2 domain; it reads LGAELPYSVT…HLELWVKVKS (78 aa).

This sequence belongs to the TRAFAC class TrmE-Era-EngA-EngB-Septin-like GTPase superfamily. Era GTPase family. As to quaternary structure, monomer.

It localises to the cytoplasm. The protein localises to the cell inner membrane. An essential GTPase that binds both GDP and GTP, with rapid nucleotide exchange. Plays a role in 16S rRNA processing and 30S ribosomal subunit biogenesis and possibly also in cell cycle regulation and energy metabolism. The chain is GTPase Era from Cronobacter sakazakii (strain ATCC BAA-894) (Enterobacter sakazakii).